The sequence spans 241 residues: Demethylmenaquinone methyltransferase (241 aa).

Residues T60, D81, and 106 to 107 each bind S-adenosyl-L-methionine; that span reads DA.

The protein belongs to the class I-like SAM-binding methyltransferase superfamily. MenG/UbiE family.

It carries out the reaction a 2-demethylmenaquinol + S-adenosyl-L-methionine = a menaquinol + S-adenosyl-L-homocysteine + H(+). It functions in the pathway quinol/quinone metabolism; menaquinone biosynthesis; menaquinol from 1,4-dihydroxy-2-naphthoate: step 2/2. Its function is as follows. Methyltransferase required for the conversion of demethylmenaquinol (DMKH2) to menaquinol (MKH2). The polypeptide is Demethylmenaquinone methyltransferase (Staphylococcus aureus (strain Mu3 / ATCC 700698)).